A 468-amino-acid polypeptide reads, in one-letter code: Cytochrome P450-like protein L532 (468 aa).

The next 2 helical transmembrane spans lie at 22–42 (WFAY…FGLI) and 172–192 (VTVL…GVDV). Residue Cys415 participates in heme binding.

This sequence belongs to the cytochrome P450 family. Heme is required as a cofactor.

The protein resides in the host membrane. It is found in the virion. This chain is Cytochrome P450-like protein L532, found in Acanthamoeba polyphaga mimivirus (APMV).